Here is a 267-residue protein sequence, read N- to C-terminus: MYLELVKKNSVILDKDGNKVKEVELPFIFSFPVRKDIIRRVFLAEFTHSLQPKGRDPMAGKRTSAESFGINLGMARVPRVKNSGEAALAPNTVGGRLTFPPSVDKKLVEEVNDKEKQLAVISALSATADTVFVKARGHVFKDSVSFPIVVTDDIVSLKTASEVEEFLEKIGVYDDVKRVKERIRIRAGKGKMRGRKYKEPIGPLIIVHDSNSPIVKAARNIAGVDVVNAKDVSVIHLAPGAHPGRLTIYTETSIKILDERLSKRLVS.

Belongs to the universal ribosomal protein uL4 family. Part of the 50S ribosomal subunit.

One of the primary rRNA binding proteins, this protein initially binds near the 5'-end of the 23S rRNA. It is important during the early stages of 50S assembly. It makes multiple contacts with different domains of the 23S rRNA in the assembled 50S subunit and ribosome. In terms of biological role, forms part of the polypeptide exit tunnel. The polypeptide is Large ribosomal subunit protein uL4 (Saccharolobus islandicus (strain M.16.27) (Sulfolobus islandicus)).